Consider the following 214-residue polypeptide: tRNA (guanine-N(7)-)-methyltransferase (214 aa).

Positions 43, 68, 95, and 117 each coordinate S-adenosyl-L-methionine. Aspartate 117 is a catalytic residue. Substrate is bound by residues lysine 121, aspartate 153, and 191-194; that span reads TEYE.

The protein belongs to the class I-like SAM-binding methyltransferase superfamily. TrmB family.

It catalyses the reaction guanosine(46) in tRNA + S-adenosyl-L-methionine = N(7)-methylguanosine(46) in tRNA + S-adenosyl-L-homocysteine. It functions in the pathway tRNA modification; N(7)-methylguanine-tRNA biosynthesis. In terms of biological role, catalyzes the formation of N(7)-methylguanine at position 46 (m7G46) in tRNA. The chain is tRNA (guanine-N(7)-)-methyltransferase from Brevibacillus brevis (strain 47 / JCM 6285 / NBRC 100599).